The chain runs to 658 residues: Threonine--tRNA ligase (658 aa).

Residues 1-64 (MSNTVSLQFP…GASGKVEIIT (64 aa)) enclose the TGS domain. The interval 246 to 548 (DHRRLGREMD…LIENFAGHMP (303 aa)) is catalytic. Positions 343, 394, and 525 each coordinate Zn(2+).

Belongs to the class-II aminoacyl-tRNA synthetase family. Homodimer. Requires Zn(2+) as cofactor.

The protein resides in the cytoplasm. The catalysed reaction is tRNA(Thr) + L-threonine + ATP = L-threonyl-tRNA(Thr) + AMP + diphosphate + H(+). Functionally, catalyzes the attachment of threonine to tRNA(Thr) in a two-step reaction: L-threonine is first activated by ATP to form Thr-AMP and then transferred to the acceptor end of tRNA(Thr). Also edits incorrectly charged L-seryl-tRNA(Thr). This is Threonine--tRNA ligase from Brucella canis (strain ATCC 23365 / NCTC 10854 / RM-666).